The sequence spans 178 residues: Histone deacetylase complex subunit SAP30L (178 aa).

2 disulfides stabilise this stretch: Cys-24-Cys-25 and Cys-33-Cys-69. The Atypical zinc-finger motif lies at 24–72; that stretch reads CCLIEDAERCGRPAGNASFSKRIQKSISQRKLKLDIDKSVRHLYICDFH. A disordered region spans residues 80–99; it reads RNKRKRKTSDDGGESPDHEV. Positions 81–86 match the Nuclear localization signal (NLS) motif; that stretch reads NKRKRK. Positions 83–85 are important for DNA and phosphoinositide binding; it reads RKR.

This sequence belongs to the SAP30 family. As to quaternary structure, interacts with components of the histone deacetylase complex sin3a, hdac1 and hdac2. Binds histones and nucleosomes. In terms of tissue distribution, detected in embryos at 2dpf (at protein level). Widely expressed during embryogenesis and in adults.

The protein resides in the nucleus. The protein localises to the nucleolus. Functions as a transcription repressor, probably via its interaction with histone deacetylase complexes. Required for normal expression of numerous target genes. Involved in the functional recruitment of the class 1 Sin3-histone deacetylase complex (HDAC) to the nucleolus. Binds DNA, apparently without sequence-specificity, and bends bound double-stranded DNA. Binds phosphoinositol phosphates (phosphoinositol 3-phosphate, phosphoinositol 4-phosphate and phosphoinositol 5-phosphate) via the same basic sequence motif that mediates DNA binding and nuclear import. In Danio rerio (Zebrafish), this protein is Histone deacetylase complex subunit SAP30L (sap30l).